Reading from the N-terminus, the 170-residue chain is MFIVSLLLLFSVLNVYSNSLDYFKSNFNYLKLSDAKSLPLQDKSTSSGNFVSHKKNNNMSVADNDDSFLYKNIQENKALNLENDLESKSAKDFFRFSAISIGSFPIVLFLSLFFFDVSYYFYSGMNANYVPYPFSNGPSFSKDEIYKKFIVSASIGAIVALTIALLDYFL.

A helical membrane pass occupies residues 96-116 (FSAISIGSFPIVLFLSLFFFD).

The protein resides in the membrane. This is an uncharacterized protein from Borreliella burgdorferi (strain ATCC 35210 / DSM 4680 / CIP 102532 / B31) (Borrelia burgdorferi).